Here is a 479-residue protein sequence, read N- to C-terminus: PRAME family member 19 (479 aa).

Residues 15–38 form an LRR 1 repeat; that stretch reads QSLLRDQALAISVLDELPRELFPR. Residues 97 to 124 form an LRR 1; degenerate repeat; that stretch reads RWKLQVLEMRDVDENFWTIWSGARPLSC. Residues 179–203 form an LRR 2; degenerate repeat; sequence HLCCTKVVNYSMNILNFRNILETVY. One copy of the LRR 3; degenerate repeat lies at 204–230; it reads PDSIQVLEIWNMCWPCMVAEVSRYLSQ. The LRR 4; degenerate repeat unit spans residues 231 to 265; it reads MKNLRKLFISDGCGYLPSFESQGQLVAEFSSVFLR. LRR repeat units lie at residues 266–291, 292–323, 324–342, 348–375, and 376–400; these read LEYLQMLYMRRIRFFEGYLDQLIRCL, KSPLETLALTYGSLDEEDLKCLPWYPSLSQLK, QLNLSHGTLRFIRLEPLRA, AATLQTLFLVDCGIGDSKLRVILPALSR, and CSNLTTFCFHGNDTSMDGLKDLLRH.

Belongs to the PRAME family.

This Homo sapiens (Human) protein is PRAME family member 19.